The primary structure comprises 60 residues: Large ribosomal subunit protein bL32 (60 aa).

Positions 1 to 23 (MACPKKKTSNAKRDQRRAHWRKQ) are enriched in basic residues. The tract at residues 1 to 60 (MACPKKKTSNAKRDQRRAHWRKQAAREAQKALSLGKSVLSGRSNSFVYPTKEEEEGEDEE) is disordered.

The protein belongs to the bacterial ribosomal protein bL32 family.

This is Large ribosomal subunit protein bL32 from Microcystis aeruginosa (strain NIES-843 / IAM M-2473).